A 286-amino-acid polypeptide reads, in one-letter code: Polyamine aminopropyltransferase (286 aa).

Residues lysine 5–aspartate 238 form the PABS domain. Spermidine contacts are provided by histidine 64 and aspartate 88. Residues glutamate 108 and asparagine 140–glycine 141 each bind S-methyl-5'-thioadenosine. Residue aspartate 158 is the Proton acceptor of the active site. Aspartate 158–aspartate 161 contacts spermidine.

This sequence belongs to the spermidine/spermine synthase family. Homodimer or homotetramer.

It localises to the cytoplasm. The catalysed reaction is S-adenosyl 3-(methylsulfanyl)propylamine + putrescine = S-methyl-5'-thioadenosine + spermidine + H(+). It participates in amine and polyamine biosynthesis; spermidine biosynthesis; spermidine from putrescine: step 1/1. Functionally, catalyzes the irreversible transfer of a propylamine group from the amino donor S-adenosylmethioninamine (decarboxy-AdoMet) to putrescine (1,4-diaminobutane) to yield spermidine. In Buchnera aphidicola subsp. Schizaphis graminum (strain Sg), this protein is Polyamine aminopropyltransferase.